The following is a 180-amino-acid chain: Ribulose bisphosphate carboxylase small subunit, chloroplastic 2 (180 aa).

A chloroplast-targeting transit peptide spans 1-56; it reads MASSVISSAAVATRSNVTQASMVAPFTGLKSSATFPVTKKQNLDITSIASNGGRVS.

Belongs to the RuBisCO small chain family. Heterohexadecamer of 8 large and 8 small subunits. In terms of assembly, (Microbial infection) Binds to tobamovirus movement protein; this interaction seems required for viral systemic movement.

Its subcellular location is the plastid. It localises to the chloroplast. It is found in the cell junction. The protein resides in the plasmodesma. In terms of biological role, ruBisCO catalyzes two reactions: the carboxylation of D-ribulose 1,5-bisphosphate, the primary event in carbon dioxide fixation, as well as the oxidative fragmentation of the pentose substrate. Both reactions occur simultaneously and in competition at the same active site. Although the small subunit is not catalytic it is essential for maximal activity. Involved in antiviral defenses. This is Ribulose bisphosphate carboxylase small subunit, chloroplastic 2 from Solanum lycopersicum (Tomato).